A 460-amino-acid polypeptide reads, in one-letter code: ATP synthase subunit beta (460 aa).

150–157 (GGAGVGKT) is an ATP binding site.

The protein belongs to the ATPase alpha/beta chains family. In terms of assembly, F-type ATPases have 2 components, CF(1) - the catalytic core - and CF(0) - the membrane proton channel. CF(1) has five subunits: alpha(3), beta(3), gamma(1), delta(1), epsilon(1). CF(0) has three main subunits: a(1), b(2) and c(9-12). The alpha and beta chains form an alternating ring which encloses part of the gamma chain. CF(1) is attached to CF(0) by a central stalk formed by the gamma and epsilon chains, while a peripheral stalk is formed by the delta and b chains.

The protein resides in the cell inner membrane. The enzyme catalyses ATP + H2O + 4 H(+)(in) = ADP + phosphate + 5 H(+)(out). In terms of biological role, produces ATP from ADP in the presence of a proton gradient across the membrane. The catalytic sites are hosted primarily by the beta subunits. This chain is ATP synthase subunit beta, found in Edwardsiella ictaluri (strain 93-146).